Here is a 504-residue protein sequence, read N- to C-terminus: Alpha-L-arabinofuranosidase C (504 aa).

N-linked (GlcNAc...) asparagine glycosylation is found at Asn-81, Asn-152, Asn-269, and Asn-329.

Belongs to the glycosyl hydrolase 51 family.

The protein resides in the secreted. The catalysed reaction is Hydrolysis of terminal non-reducing alpha-L-arabinofuranoside residues in alpha-L-arabinosides.. The protein operates within glycan metabolism; L-arabinan degradation. Functionally, alpha-L-arabinofuranosidase involved in the degradation of arabinoxylan, a major component of plant hemicellulose. Acts only on small linear 1,5-alpha-linked L-arabinofuranosyl oligosaccharides. The sequence is that of Alpha-L-arabinofuranosidase C (abfC) from Emericella nidulans (strain FGSC A4 / ATCC 38163 / CBS 112.46 / NRRL 194 / M139) (Aspergillus nidulans).